Consider the following 1937-residue polypeptide: Collagen-like protein 7 (1937 aa).

2 N-linked (GlcNAc...) asparagine; by host glycosylation sites follow: Asn6 and Asn21. 4 disordered regions span residues 88 to 248, 294 to 531, 583 to 643, and 670 to 1144; these read CKGN…KGDK, NLKG…PDLG, LKGD…NQGV, and IKGD…DTAT. 5 consecutive Collagen-like domains span residues 102-161, 168-227, 297-356, 363-422, and 453-512; these read GPKG…KGEK, GEKG…KGDI, GEKG…KGEK, GDKG…IGEK, and GDKG…KGDK. Positions 296–514 are enriched in basic and acidic residues; the sequence is KGEKGDKGNK…DKGDKGDKGD (219 aa). Asn515 carries an N-linked (GlcNAc...) asparagine; by host glycan. 3 stretches are compositionally biased toward basic and acidic residues: residues 584–605, 614–625, and 670–899; these read KGDK…KGDK, KGEKGDKGDKGD, and IKGD…KGDK. 5 consecutive Collagen-like domains span residues 672 to 731, 735 to 854, 867 to 926, 936 to 995, and 1023 to 1142; these read GDKG…KGDK, GNKG…KGNI, GLKG…KGDK, GIKG…KGDK, and GSKG…KGDT. Asn902 carries N-linked (GlcNAc...) asparagine; by host glycosylation. Over residues 907 to 1141 the composition is skewed to basic and acidic residues; the sequence is YKGDKGDKGS…DKGDKGDKGD (235 aa). N-linked (GlcNAc...) asparagine; by host glycans are attached at residues Asn1178, Asn1192, Asn1212, Asn1217, Asn1245, Asn1246, Asn1255, Asn1317, Asn1422, Asn1427, Asn1432, Asn1443, Asn1452, Asn1477, Asn1494, Asn1506, Asn1513, Asn1533, Asn1598, Asn1619, Asn1620, Asn1632, Asn1641, Asn1663, Asn1664, Asn1672, Asn1682, Asn1683, Asn1732, Asn1735, Asn1746, Asn1756, Asn1784, Asn1842, and Asn1934.

In terms of processing, may be hydroxylated on lysine by the viral-encoded procollagen-lysine,2-oxoglutarate 5-dioxygenase.

The protein resides in the virion. Functionally, may participate in the formation of a layer of cross-linked glycosylated fibrils at the viral surface thus giving it a hairy-like appearance. This chain is Collagen-like protein 7, found in Acanthamoeba polyphaga mimivirus (APMV).